Reading from the N-terminus, the 384-residue chain is Flap endonuclease 1 (384 aa).

Residues 1 to 105 (MGIKKLTDLI…GELAKRQARR (105 aa)) form an N-domain region. Asp34 contributes to the Mg(2+) binding site. Arg71 is a DNA binding site. The Mg(2+) site is built by Asp87, Glu159, Glu161, Asp180, and Asp182. The tract at residues 123 to 254 (EVQKFAKRVI…KRAIELIQKH (132 aa)) is I-domain. Glu159 is a binding site for DNA. Gly232 and Asp234 together coordinate DNA. Residue Asp234 coordinates Mg(2+). Residues 338-346 (VQSRMDSFI) form an interaction with PCNA region. A disordered region spans residues 349–384 (IKKPEDPNDKKKKVTKTPSKPSAKTSKKSSSTFKRK). The span at 364–384 (KTPSKPSAKTSKKSSSTFKRK) shows a compositional bias: low complexity.

The protein belongs to the XPG/RAD2 endonuclease family. FEN1 subfamily. As to quaternary structure, interacts with PCNA. Three molecules of repg bind to one PCNA trimer with each molecule binding to one PCNA monomer. PCNA stimulates the nuclease activity without altering cleavage specificity. Mg(2+) is required as a cofactor. Post-translationally, phosphorylated. Phosphorylation upon DNA damage induces relocalization to the nuclear plasma.

The protein localises to the nucleus. It localises to the nucleolus. Its subcellular location is the nucleoplasm. The protein resides in the mitochondrion. Functionally, structure-specific nuclease with 5'-flap endonuclease and 5'-3' exonuclease activities involved in DNA replication and repair. During DNA replication, cleaves the 5'-overhanging flap structure that is generated by displacement synthesis when DNA polymerase encounters the 5'-end of a downstream Okazaki fragment. It enters the flap from the 5'-end and then tracks to cleave the flap base, leaving a nick for ligation. Also involved in the long patch base excision repair (LP-BER) pathway, by cleaving within the apurinic/apyrimidinic (AP) site-terminated flap. Acts as a genome stabilization factor that prevents flaps from equilibrating into structures that lead to duplications and deletions. Also possesses 5'-3' exonuclease activity on nicked or gapped double-stranded DNA, and exhibits RNase H activity. Also involved in replication and repair of rDNA and in repairing mitochondrial DNA. In Dictyostelium discoideum (Social amoeba), this protein is Flap endonuclease 1.